Reading from the N-terminus, the 321-residue chain is Glycerol-3-phosphate phosphatase (321 aa).

The active-site Nucleophile is the Asp-34. Residues Asp-34, Asp-36, and Asp-260 each contribute to the Mg(2+) site. Residue Asp-36 is the Proton donor of the active site.

This sequence belongs to the HAD-like hydrolase superfamily. CbbY/CbbZ/Gph/YieH family. In terms of assembly, homodimer. The cofactor is Mg(2+). Expression was confirmed in liver, adipose tissue, testis and pancreatic islet.

The catalysed reaction is O-phospho-L-tyrosyl-[protein] + H2O = L-tyrosyl-[protein] + phosphate. The enzyme catalyses sn-glycerol 1-phosphate + H2O = glycerol + phosphate. It carries out the reaction sn-glycerol 3-phosphate + H2O = glycerol + phosphate. In terms of biological role, glycerol-3-phosphate phosphatase hydrolyzing glycerol-3-phosphate into glycerol. Thereby, regulates the cellular levels of glycerol-3-phosphate a metabolic intermediate of glucose, lipid and energy metabolism. Was also shown to have a 2-phosphoglycolate phosphatase activity and a tyrosine-protein phosphatase activity. However, their physiological relevance is unclear. In vitro, also has a phosphatase activity toward ADP, ATP, GDP and GTP. The polypeptide is Glycerol-3-phosphate phosphatase (Rattus norvegicus (Rat)).